The following is a 479-amino-acid chain: Anaerobic nitric oxide reductase flavorubredoxin (479 aa).

The zinc metallo-hydrolase stretch occupies residues 30–210 (LRGSSYNSYL…PFSRLVTPKI (181 aa)). Histidine 79, glutamate 81, aspartate 83, histidine 147, aspartate 166, and histidine 227 together coordinate Fe cation. Positions 254–393 (ITIFYDTMSN…LCRQHGRDIA (140 aa)) constitute a Flavodoxin-like domain. FMN contacts are provided by residues 260–264 (TMSNN) and 342–369 (AFGS…EMSL). The Rubredoxin-like domain occupies 423–474 (GPKMQCSVCQWIYDPAQGEPLQDVAPGTPWSDVPDNFLCPECSLGKDVFDVL). Fe cation-binding residues include cysteine 428, cysteine 431, cysteine 461, and cysteine 464.

In the N-terminal section; belongs to the zinc metallo-hydrolase group 3 family. Homotetramer. Fe cation is required as a cofactor. FMN serves as cofactor.

It localises to the cytoplasm. Its pathway is nitrogen metabolism; nitric oxide reduction. In terms of biological role, anaerobic nitric oxide reductase; uses NADH to detoxify nitric oxide (NO), protecting several 4Fe-4S NO-sensitive enzymes. Has at least 2 reductase partners, only one of which (NorW, flavorubredoxin reductase) has been identified. NO probably binds to the di-iron center; electrons enter from the NorW at rubredoxin and are transferred sequentially to the FMN center and the di-iron center. Also able to function as an aerobic oxygen reductase. The protein is Anaerobic nitric oxide reductase flavorubredoxin of Salmonella choleraesuis (strain SC-B67).